The sequence spans 207 residues: Large ribosomal subunit protein uL4 (207 aa).

Residues 50 to 75 (KTKTVSEVSGTTKKPFKQKGTGNARQ) form a disordered region.

It belongs to the universal ribosomal protein uL4 family. In terms of assembly, part of the 50S ribosomal subunit.

In terms of biological role, one of the primary rRNA binding proteins, this protein initially binds near the 5'-end of the 23S rRNA. It is important during the early stages of 50S assembly. It makes multiple contacts with different domains of the 23S rRNA in the assembled 50S subunit and ribosome. Forms part of the polypeptide exit tunnel. This is Large ribosomal subunit protein uL4 from Rickettsia akari (strain Hartford).